Consider the following 213-residue polypeptide: MPYLENSESSPDPTPLDAFHCLVQDINKVLGPSSGLDSDDVDPMDIQKLMEDYTSNESEWERYAFGDAGRAYTRNLVDEGNGKCNLLILVWSPGKGSAIHDHANAHCVMKVLKGSLRETLYGWPESDKVQKGEPSPLTVTRDKVYKEGQVTYMSDKLGLHKISNPDPTNFAISLHLYTPPNAAHYGFSLFDEKTGKSRHVKQSVLFSRKGHKL.

Residues H100, H102, and H160 each coordinate Fe cation. Positions 107–177 form a cross-link, 3'-(S-cysteinyl)-tyrosine (Cys-Tyr); that stretch reads CVMKVLKGSL…TNFAISLHLY (71 aa).

Belongs to the cysteine dioxygenase family. Requires Fe cation as cofactor. Post-translationally, the thioether cross-link between Cys-107 and Tyr-177 plays a structural role through stabilizing the Fe(2+) ion, and prevents the production of highly damaging free hydroxyl radicals by holding the oxygen radical via hydroxyl hydrogen.

The enzyme catalyses L-cysteine + O2 = 3-sulfino-L-alanine + H(+). The protein is Cysteine dioxygenase (CDO1) of Ajellomyces capsulatus (strain G186AR / H82 / ATCC MYA-2454 / RMSCC 2432) (Darling's disease fungus).